Here is a 448-residue protein sequence, read N- to C-terminus: MTTILKHLPVGQRIGIAFSGGLDTSAALLWMRQKGAVPYAYTANLGQPDEDDYDEIPRRAMEYGAENARLIDCRKQLVAEGIAAIQCGAFHNTTAGVTYFNTTPLGRAVTGTMLVAAMKEDGVNIWGDGSTYKGNDIERFYRYGLLTNAELKIYKPWLDTDFIDELGGRQEMSEFMSQAGFGYKMSAEKAYSTDSNILGATHEAKDLEFLNSSVKIVNPIMGVKFWDENVKVPAEEVTIRFERGHPVALNGKTFTDDIELMLEANRIGGRHGLGMSDQIENRIIEAKSRGIYEAPGMALLHIAYERLLTGIHNEDTIEQYHANGRQLGRFLYQGRWFDSQALMLRDSSQRWIASAITGEVTLELRRGNDYSIMNTVSDNLTYKPERLTMEKGDSVFSPDDRIGQLTMRNLDITDTREKLFNYAETGLLSSSASTGLPQVGQLQDKTEK.

ATP-binding positions include 17-25 (AFSGGLDTS) and Ala-43. Tyr-99 serves as a coordination point for L-citrulline. Residues Gly-129 and Thr-131 each contribute to the ATP site. The L-aspartate site is built by Thr-131, Asn-135, and Asp-136. Asn-135 is an L-citrulline binding site. Residue Asp-136 coordinates ATP. L-citrulline-binding residues include Arg-139 and Ser-192. Asp-194 contacts ATP. L-citrulline-binding residues include Thr-201, Glu-203, and Glu-280.

This sequence belongs to the argininosuccinate synthase family. Type 2 subfamily. In terms of assembly, homotetramer.

The protein localises to the cytoplasm. It carries out the reaction L-citrulline + L-aspartate + ATP = 2-(N(omega)-L-arginino)succinate + AMP + diphosphate + H(+). Its pathway is amino-acid biosynthesis; L-arginine biosynthesis; L-arginine from L-ornithine and carbamoyl phosphate: step 2/3. The sequence is that of Argininosuccinate synthase from Pectobacterium atrosepticum (strain SCRI 1043 / ATCC BAA-672) (Erwinia carotovora subsp. atroseptica).